The sequence spans 313 residues: Solute carrier family 35 member E3 (313 aa).

A run of 9 helical transmembrane segments spans residues 17–37 (GLLF…WIYV), 40–60 (GFPN…GLYI), 71–91 (SLPL…VVFT), 126–146 (FSVR…LNSY), 154–174 (LGMV…VWVG), 187–206 (LLYY…VPFF), 225–245 (LMVL…YWII), 252–272 (TYNM…YILF), and 275–295 (PLSV…LTYT).

The protein belongs to the TPT transporter family. SLC35E subfamily.

Its subcellular location is the membrane. Functionally, putative transporter. In Mus musculus (Mouse), this protein is Solute carrier family 35 member E3 (Slc35e3).